The following is a 489-amino-acid chain: ERO1-like protein alpha (489 aa).

Residues 1–20 (METCVLLLGLFLTSVHVTTA) form the signal peptide. Cystine bridges form between cysteine 27/cysteine 40, cysteine 29/cysteine 38, cysteine 77/cysteine 382, cysteine 86/cysteine 91, cysteine 86/cysteine 123, cysteine 91/cysteine 96, cysteine 200/cysteine 232, and cysteine 385/cysteine 388. Positions 179, 181, and 192 each coordinate FAD. The FAD site is built by serine 243 and histidine 246. A glycan (N-linked (GlcNAc...) asparagine) is linked at asparagine 271. Positions 278 and 291 each coordinate FAD. Asparagine 375 carries an N-linked (GlcNAc...) asparagine glycan.

The protein belongs to the EROs family. As to quaternary structure, predominantly monomer. May function both as a monomer and a homodimer. Requires FAD as cofactor. Post-translationally, the Cys-86/Cys-91 and Cys-385/Cys-388 disulfide bonds constitute the redox-active center. The Cys-86/Cys-91 disulfide bond may accept electron from protein disulfide isomerase (PDI) and funnel them to the active site disulfide Cys-385/Cys-388.

It is found in the endoplasmic reticulum membrane. Its activity is regulated as follows. Enzyme activity is tightly regulated to prevent the accumulation of reactive oxygen species in the endoplasmic reticulum. Reversibly down-regulated by the formation of disulfide bonds between the active site Cys-86 and Cys-123, and between Cys-91 and Cys-96. Glutathione may be required to regulate its activity in the endoplasmic reticulum. Oxidoreductase involved in disulfide bond formation in the endoplasmic reticulum. Efficiently reoxidizes P4HB/PDI, the enzyme catalyzing protein disulfide formation, in order to allow P4HB to sustain additional rounds of disulfide formation. Following P4HB reoxidation, passes its electrons to molecular oxygen via FAD, leading to the production of reactive oxygen species (ROS) in the cell. Required for the folding of immunoglobulins. This chain is ERO1-like protein alpha, found in Danio rerio (Zebrafish).